The primary structure comprises 351 residues: DNA polymerase IV (351 aa).

The region spanning 4 to 185 is the UmuC domain; it reads IIHVDMDCFF…LPLAKIPGVG (182 aa). Residues aspartate 8 and aspartate 103 each coordinate Mg(2+). Residue glutamate 104 is part of the active site.

This sequence belongs to the DNA polymerase type-Y family. In terms of assembly, monomer. Mg(2+) is required as a cofactor.

The protein resides in the cytoplasm. It catalyses the reaction DNA(n) + a 2'-deoxyribonucleoside 5'-triphosphate = DNA(n+1) + diphosphate. Functionally, poorly processive, error-prone DNA polymerase involved in untargeted mutagenesis. Copies undamaged DNA at stalled replication forks, which arise in vivo from mismatched or misaligned primer ends. These misaligned primers can be extended by PolIV. Exhibits no 3'-5' exonuclease (proofreading) activity. May be involved in translesional synthesis, in conjunction with the beta clamp from PolIII. The protein is DNA polymerase IV of Escherichia coli O157:H7.